The chain runs to 368 residues: Chorismate synthase (368 aa).

NADP(+)-binding residues include R48 and R54. Residues 125–127, 238–239, G278, 293–297, and R319 each bind FMN; these read RSS, NA, and KPTSS.

It belongs to the chorismate synthase family. As to quaternary structure, homotetramer. The cofactor is FMNH2.

It catalyses the reaction 5-O-(1-carboxyvinyl)-3-phosphoshikimate = chorismate + phosphate. Its pathway is metabolic intermediate biosynthesis; chorismate biosynthesis; chorismate from D-erythrose 4-phosphate and phosphoenolpyruvate: step 7/7. In terms of biological role, catalyzes the anti-1,4-elimination of the C-3 phosphate and the C-6 proR hydrogen from 5-enolpyruvylshikimate-3-phosphate (EPSP) to yield chorismate, which is the branch point compound that serves as the starting substrate for the three terminal pathways of aromatic amino acid biosynthesis. This reaction introduces a second double bond into the aromatic ring system. This is Chorismate synthase from Methylibium petroleiphilum (strain ATCC BAA-1232 / LMG 22953 / PM1).